The chain runs to 107 residues: MKWIVIDTIIQPSCGISFSAIWGNMKMIIWYQSTIFLPPGSIFTPVKSGIILKDKEYPITIYNIAPFNKDLWSLLKSSQECPPGESKITNKCLHNSCIIKICPYGLK.

Belongs to the IraM/RssC family.

Its subcellular location is the cytoplasm. Functionally, inhibits RpoS proteolysis by regulating RssB activity, thereby increasing the stability of the sigma stress factor RpoS during magnesium starvation. In Escherichia coli (strain 55989 / EAEC), this protein is Anti-adapter protein IraM.